A 502-amino-acid polypeptide reads, in one-letter code: Glycerol kinase (502 aa).

An ADP-binding site is contributed by threonine 13. Residues threonine 13, threonine 14, and serine 15 each coordinate ATP. Threonine 13 contacts sn-glycerol 3-phosphate. Arginine 17 is a binding site for ADP. Sn-glycerol 3-phosphate-binding residues include arginine 83, glutamate 84, tyrosine 136, and aspartate 246. Glycerol is bound by residues arginine 83, glutamate 84, tyrosine 136, aspartate 246, and glutamine 247. ADP is bound by residues threonine 268 and glycine 311. Threonine 268, glycine 311, glutamine 315, and glycine 412 together coordinate ATP. Positions 412 and 416 each coordinate ADP.

Belongs to the FGGY kinase family.

It carries out the reaction glycerol + ATP = sn-glycerol 3-phosphate + ADP + H(+). Its pathway is polyol metabolism; glycerol degradation via glycerol kinase pathway; sn-glycerol 3-phosphate from glycerol: step 1/1. Its activity is regulated as follows. Inhibited by fructose 1,6-bisphosphate (FBP). Its function is as follows. Key enzyme in the regulation of glycerol uptake and metabolism. Catalyzes the phosphorylation of glycerol to yield sn-glycerol 3-phosphate. This is Glycerol kinase from Francisella tularensis subsp. mediasiatica (strain FSC147).